The primary structure comprises 335 residues: GTPase Obg (335 aa).

The Obg domain maps to 1–159; it reads MKFVDSASIR…REIGLELSIM (159 aa). Positions 160–332 constitute an OBG-type G domain; sequence ADIGLLGMPN…LVAGLFKLVK (173 aa). Residues 166–173, 191–195, 212–215, 282–285, and 313–315 contribute to the GTP site; these read GMPNAGKS, FTTLH, DIPG, NKMD, and SAL. Residues S173 and T193 each coordinate Mg(2+).

This sequence belongs to the TRAFAC class OBG-HflX-like GTPase superfamily. OBG GTPase family. Monomer. Mg(2+) serves as cofactor.

Its subcellular location is the cytoplasm. In terms of biological role, an essential GTPase which binds GTP, GDP and possibly (p)ppGpp with moderate affinity, with high nucleotide exchange rates and a fairly low GTP hydrolysis rate. Plays a role in control of the cell cycle, stress response, ribosome biogenesis and in those bacteria that undergo differentiation, in morphogenesis control. The sequence is that of GTPase Obg from Ruthia magnifica subsp. Calyptogena magnifica.